Consider the following 101-residue polypeptide: Small ribosomal subunit protein uS14m (101 aa).

This sequence belongs to the universal ribosomal protein uS14 family. As to quaternary structure, component of the mitochondrial ribosome small subunit (28S) which comprises a 12S rRNA and about 30 distinct proteins. Interacts with LIAT1.

The protein resides in the mitochondrion. This chain is Small ribosomal subunit protein uS14m (mrps14), found in Dictyostelium citrinum (Slime mold).